The sequence spans 108 residues: Ig kappa chain V-V region HP 123E6 (108 aa).

A framework-1 region spans residues D1–C23. An intrachain disulfide couples C23 to C88. Positions R24–N34 are complementarity-determining-1. Residues W35–Y49 are framework-2. The tract at residues Y50–S56 is complementarity-determining-2. The segment at G57 to C88 is framework-3. The tract at residues Q89 to T97 is complementarity-determining-3. The segment at F98 to R108 is framework-4.

This is Ig kappa chain V-V region HP 123E6 from Mus musculus (Mouse).